The following is a 331-amino-acid chain: Cytoplasmic envelopment protein 1 (331 aa).

This sequence belongs to the herpesviridae cytoplasmic envelopment protein 1 family. As to quaternary structure, interacts with protein ORF7; this interaction localizes protein ORF53 to the host trans-Golgi network (TGN).

The protein resides in the virion. It is found in the virion tegument. The protein localises to the host cytoplasm. It localises to the host Golgi apparatus. In terms of biological role, plays a critical role in cytoplasmic virus egress. Participates in the final step of tegumentation and envelope acquisition within the host cytoplasm. This chain is Cytoplasmic envelopment protein 1 (ORF53), found in Varicella-zoster virus (strain Dumas) (HHV-3).